The chain runs to 116 residues: Flagellar transcriptional regulator FlhD (116 aa).

It belongs to the FlhD family. Homodimer; disulfide-linked. Forms a heterohexamer composed of two FlhC and four FlhD subunits. Each FlhC binds a FlhD dimer, forming a heterotrimer, and a hexamer assembles by dimerization of two heterotrimers.

The protein resides in the cytoplasm. In terms of biological role, functions in complex with FlhC as a master transcriptional regulator that regulates transcription of several flagellar and non-flagellar operons by binding to their promoter region. Activates expression of class 2 flagellar genes, including fliA, which is a flagellum-specific sigma factor that turns on the class 3 genes. Also regulates genes whose products function in a variety of physiological pathways. This is Flagellar transcriptional regulator FlhD from Escherichia coli O9:H4 (strain HS).